A 489-amino-acid chain; its full sequence is Probable capsid protein (489 aa).

Basic and acidic residues predominate over residues 87-101 (RMERGESSETKREQQ). Residues 87-111 (RMERGESSETKREQQDLGATRKRKI) are disordered. Positions 107 to 110 (RKRK) match the Nuclear localization signal motif. The CCHC-type zinc finger occupies 409-426 (CRCWICTEEGHYANECPN). The segment at 466 to 489 (ETTSEEESTTDSDSSSSDDEQLSF) is disordered.

This sequence belongs to the caulimoviridae capsid protein family. Interacts (via nuclear localization signal) with host importin alpha.

It localises to the virion. Its subcellular location is the host nucleus. In terms of biological role, self assembles to form an icosahedral capsid, about 50 nm in diameter, nm, composed of 420 subunits of the viral capsid protein. The capsid encapsulates the genomic dsDNA. Following virus entry into host cell, provides nuclear import of the viral genome. Virus particles do not enter the nucleus, but dock at the nuclear membrane through the interaction with host importins. The sequence is that of Probable capsid protein from Scrophularia californica (California bee plant).